Consider the following 130-residue polypeptide: Serum amyloid A-4 protein (130 aa).

An N-terminal signal peptide occupies residues 1-18 (MRLATVIVLCSLFLGVSG). A disordered region spans residues 109 to 130 (EEWGRSGKNPNHFRPEGLPEKF). The span at 121 to 130 (FRPEGLPEKF) shows a compositional bias: basic and acidic residues.

This sequence belongs to the SAA family. In terms of assembly, apolipoprotein of the HDL complex. As to expression, expressed by the liver; secreted in plasma.

Its subcellular location is the secreted. Functionally, major acute phase reactant. The chain is Serum amyloid A-4 protein from Mus musculus (Mouse).